The primary structure comprises 570 residues: Urease subunit alpha (570 aa).

The Urease domain occupies 132–570 (GGFDSHIHYI…LPLAQRYFLF (439 aa)). Positions 137, 139, and 220 each coordinate Ni(2+). K220 is subject to N6-carboxylysine. H222 contacts substrate. Residues H249 and H275 each coordinate Ni(2+). H323 serves as the catalytic Proton donor. Residue D363 coordinates Ni(2+).

It belongs to the metallo-dependent hydrolases superfamily. Urease alpha subunit family. In terms of assembly, heterotrimer of UreA (gamma), UreB (beta) and UreC (alpha) subunits. Three heterotrimers associate to form the active enzyme. It depends on Ni cation as a cofactor. Post-translationally, carboxylation allows a single lysine to coordinate two nickel ions.

The protein localises to the cytoplasm. The enzyme catalyses urea + 2 H2O + H(+) = hydrogencarbonate + 2 NH4(+). It participates in nitrogen metabolism; urea degradation; CO(2) and NH(3) from urea (urease route): step 1/1. In Ruegeria sp. (strain TM1040) (Silicibacter sp.), this protein is Urease subunit alpha.